A 356-amino-acid polypeptide reads, in one-letter code: MMLFFSSLYDWLPGVNVFRYITFRTVAAMLTSGLIVFLFGPSIISSLKVRQGKGQPIRADGPQTHFKKAGTPTMGGLMILSGVVISALLWGNLFNIYLWVSLFVMLFFGAIGFYDDYLKVTKQTDKGFSGKARLSLEFLVASIASFIILQVGSPGLALPFVKEYFINLGWFFIPFSACVVVGLGNAVNLTDGLDGLAIVPVMVASLSFALIAYLSGNINFADYLQIHYVSGVGELAVLLGAVFGAGLGFLWFNAPPAAIFMGDTGSLALGGLLGIVSVATKHEIVLIFIGGLFVLETLSVIIQVGWFKLTKKRVFLMAPIHHHFEKKGWTESQIVVRFWIIAIVLALIGLSTLKLR.

10 helical membrane passes run 25-45 (TVAA…SIIS), 70-90 (GTPT…ALLW), 93-113 (LFNI…AIGF), 138-158 (FLVA…GLAL), 164-184 (YFIN…VGLG), 195-215 (GLAI…AYLS), 232-252 (VGEL…FLWF), 258-278 (AIFM…IVSV), 284-304 (IVLI…IIQV), and 333-353 (QIVV…LSTL).

Belongs to the glycosyltransferase 4 family. MraY subfamily. It depends on Mg(2+) as a cofactor.

The protein localises to the cell inner membrane. The enzyme catalyses UDP-N-acetyl-alpha-D-muramoyl-L-alanyl-gamma-D-glutamyl-meso-2,6-diaminopimeloyl-D-alanyl-D-alanine + di-trans,octa-cis-undecaprenyl phosphate = di-trans,octa-cis-undecaprenyl diphospho-N-acetyl-alpha-D-muramoyl-L-alanyl-D-glutamyl-meso-2,6-diaminopimeloyl-D-alanyl-D-alanine + UMP. It participates in cell wall biogenesis; peptidoglycan biosynthesis. Its function is as follows. Catalyzes the initial step of the lipid cycle reactions in the biosynthesis of the cell wall peptidoglycan: transfers peptidoglycan precursor phospho-MurNAc-pentapeptide from UDP-MurNAc-pentapeptide onto the lipid carrier undecaprenyl phosphate, yielding undecaprenyl-pyrophosphoryl-MurNAc-pentapeptide, known as lipid I. The sequence is that of Phospho-N-acetylmuramoyl-pentapeptide-transferase from Bartonella bacilliformis (strain ATCC 35685 / KC583 / Herrer 020/F12,63).